A 915-amino-acid polypeptide reads, in one-letter code: Translation initiation factor IF-2 (915 aa).

2 disordered regions span residues 1–105 and 121–295; these read MSEG…RALT and VEAA…RAAI. Residues 57–81 show a composition bias toward low complexity; the sequence is PGTPSAPEGGSSSAPAPQSGNAPQG. Residues 84–101 are compositionally biased toward gly residues; that stretch reads RSGGGNRGSGRGGAGGAG. Composition is skewed to basic and acidic residues over residues 121–135 and 143–180; these read VEAA…EQEK and EEAR…RKAA. Pro residues predominate over residues 186-195; that stretch reads AEAPPVPPPA. Composition is skewed to low complexity over residues 201–213 and 230–239; these read AAPS…SRTA and KVPVAAPSAP. The span at 243–256 shows a compositional bias: basic and acidic residues; it reads RLRERGDEGEEERK. Positions 266–278 are enriched in low complexity; sequence PAPRKAAAPVAKK. Over residues 279–295 the composition is skewed to basic and acidic residues; sequence AVAEPRRGGRIDVRAAI. Residues 414–584 form the tr-type G domain; it reads PRPPVVTVMG…LLQAEVLDLK (171 aa). A G1 region spans residues 423-430; sequence GHVDHGKT. 423-430 serves as a coordination point for GTP; the sequence is GHVDHGKT. The segment at 448–452 is G2; the sequence is GITQH. The tract at residues 470–473 is G3; that stretch reads DTPG. Residues 470–474 and 524–527 contribute to the GTP site; these read DTPGH and NKCD. Positions 524 to 527 are G4; it reads NKCD. Positions 560-562 are G5; sequence SAL.

This sequence belongs to the TRAFAC class translation factor GTPase superfamily. Classic translation factor GTPase family. IF-2 subfamily.

The protein resides in the cytoplasm. In terms of biological role, one of the essential components for the initiation of protein synthesis. Protects formylmethionyl-tRNA from spontaneous hydrolysis and promotes its binding to the 30S ribosomal subunits. Also involved in the hydrolysis of GTP during the formation of the 70S ribosomal complex. The polypeptide is Translation initiation factor IF-2 (Granulibacter bethesdensis (strain ATCC BAA-1260 / CGDNIH1)).